We begin with the raw amino-acid sequence, 400 residues long: Envelope glycoprotein M (400 aa).

Over 1-16 (MRASKSDRFLMSSWVK) the chain is Intravirion. A helical transmembrane segment spans residues 17–37 (LLFVAVIMYICSAVVPMAATY). The Virion surface segment spans residues 38–76 (EGLGFPCYFNNLVNYSALNLTVRNSAKHLTPTLFLEKPE). A helical transmembrane segment spans residues 77–97 (MLVYIFWTFIVDGIAIVYYCL). Residues 98-113 (AAVAVYRAKHVHATTM) lie on the Intravirion side of the membrane. Residues 114–134 (MSMQSWIALLGSHSVLYVAIL) form a helical membrane-spanning segment. The Virion surface portion of the chain corresponds to 135–152 (RMWSMQLFIHVLSYKHVL). Residues 153–173 (MAAFVYCIHFCISFAHIQSLI) traverse the membrane as a helical segment. The Intravirion portion of the chain corresponds to 174–208 (TCNSAQWEIPLLEQHVPDNTMMESLLTRWKPVCVN). The helical transmembrane segment at 209–229 (LYLSTTALEMLLFSLSTMMAV) threads the bilayer. Topologically, residues 230-234 (GNSFY) are virion surface. Residues 235–255 (VLVSDAIFGAVNMFLALTVVW) traverse the membrane as a helical segment. Topologically, residues 256–270 (YINTEFFLVKFMRRQ) are intravirion. A helical transmembrane segment spans residues 271–291 (VGFYVGVFVGYLILLLPVIRY). Residues 292–300 (ENAFVQANL) lie on the Virion surface side of the membrane. The chain crosses the membrane as a helical span at residues 301–321 (HYIVAINISCIPILCILAIVI). The Intravirion portion of the chain corresponds to 322–400 (RVIRSDWGLC…EIDETQMIFI (79 aa)). The tract at residues 348–394 (DRTPTVHQKPPPLPAKTRARAKVKDISTPAPRTQYQSDHESDSEIDE) is disordered.

The protein belongs to the herpesviridae glycoprotein M family. As to quaternary structure, interacts (via N-terminus) with gN (via N-terminus). The gM-gN heterodimer forms the gCII complex. N-glycosylated.

The protein resides in the virion membrane. Its subcellular location is the host Golgi apparatus. The protein localises to the host trans-Golgi network. It is found in the host endosome membrane. It localises to the host nucleus inner membrane. In terms of biological role, envelope glycoprotein important for virion assembly and egress. Plays a role in the correct incorporation of gH-gL into virion membrane. Directs the glycoprotein N (gN) to the host trans-Golgi network. This chain is Envelope glycoprotein M, found in Homo sapiens (Human).